A 315-amino-acid chain; its full sequence is Deoxyhypusine hydroxylase (315 aa).

HEAT-like PBS-type repeat units lie at residues 23–52, 56–82, 89–115, 179–205, 211–237, and 244–270; these read IAKR…LNDK, LRHE…LVKN, VRHE…YSND, NRYR…GLKD, LRHE…CVLD, and VRHE…LLQD. Fe cation is bound by residues His58, His91, and Glu92. Fe cation is bound by residues His213, His246, and Glu247.

Belongs to the deoxyhypusine hydroxylase family. The cofactor is Fe(2+).

It carries out the reaction [eIF5A protein]-deoxyhypusine + AH2 + O2 = [eIF5A protein]-hypusine + A + H2O. It participates in protein modification; eIF5A hypusination. Functionally, catalyzes the hydroxylation of the N(6)-(4-aminobutyl)-L-lysine intermediate produced by deoxyhypusine synthase/DHPS on a critical lysine of the eukaryotic translation initiation factor 5A/eIF-5A. This is the second step of the post-translational modification of that lysine into an unusual amino acid residue named hypusine. Hypusination is unique to mature eIF-5A factor and is essential for its function. This chain is Deoxyhypusine hydroxylase (dohh-1), found in Dictyostelium discoideum (Social amoeba).